A 238-amino-acid chain; its full sequence is MEEEFPTISLLGIDFNLSNILMITVTCVIVLLIAIICTRNLQRRPTGKQNFIEWVMDFVRGIINSNMDWKTGGRFHVLGITILMFVFVANMLGLPLQIAVNDEVWWRSPTADPIVTLTLAIMVLGLTHYYGIKMRGFKHYFVGTYLSPMKFLFPLKLVEEFANTLTLGLRLYGNIFAGEVLLTIIATQLAHINIFVGVLAIIPAIIWQAFSLFIGAIQAYIFTMLTMVYMSHKVSDEH.

Helical transmembrane passes span 17 to 37, 75 to 95, 112 to 132, 172 to 192, and 194 to 214; these read LSNILMITVTCVIVLLIAIIC, FHVLGITILMFVFVANMLGLP, DPIVTLTLAIMVLGLTHYYGI, YGNIFAGEVLLTIIATQLAHI, and IFVGVLAIIPAIIWQAFSLFI.

This sequence belongs to the ATPase A chain family. F-type ATPases have 2 components, CF(1) - the catalytic core - and CF(0) - the membrane proton channel. CF(1) has five subunits: alpha(3), beta(3), gamma(1), delta(1), epsilon(1). CF(0) has three main subunits: a(1), b(2) and c(9-12). The alpha and beta chains form an alternating ring which encloses part of the gamma chain. CF(1) is attached to CF(0) by a central stalk formed by the gamma and epsilon chains, while a peripheral stalk is formed by the delta and b chains.

The protein localises to the cell membrane. Its function is as follows. Key component of the proton channel; it plays a direct role in the translocation of protons across the membrane. In Listeria monocytogenes serovar 1/2a (strain ATCC BAA-679 / EGD-e), this protein is ATP synthase subunit a.